The primary structure comprises 325 residues: Sulfite dehydrogenase subunit C (325 aa).

8 helical membrane passes run 5-25 (FSVIFLTTLLGAGQGLYLAMV), 43-63 (FYAVGSLVALLLLIAGLGASF), 87-107 (EVIVLPIVMALVFAYGVAHWF), 126-146 (LLLGVLGTIASLALFVCTAMI), 165-185 (FLFLGAASGFMLAAAYSAYIG), 186-206 (NPLVTFYGTWAVILTLVGLAS), 266-286 (VYLVLVFPIPVLLIGLSYLIG), and 290-310 (LPIIAFFVQFAGLLIERWSFF).

This sequence belongs to the DmsC family. In terms of assembly, forms a heterotrimeric membrane-bound complex composed of a catalytic heterodimer (SoeAB) and a membrane anchor protein (SoeC).

It is found in the cell inner membrane. Its function is as follows. Part of the SoeABC complex that catalyzes the oxidation of sulfite to sulfate. SoeC probably anchors and stabilizes the catalytic subunits. The protein is Sulfite dehydrogenase subunit C of Allochromatium vinosum (strain ATCC 17899 / DSM 180 / NBRC 103801 / NCIMB 10441 / D) (Chromatium vinosum).